Consider the following 344-residue polypeptide: Holliday junction branch migration complex subunit RuvB (344 aa).

Residues 4 to 194 (CLLRFCYNSL…FGITGHMEYY (191 aa)) are large ATPase domain (RuvB-L). Residues L33, R34, G75, K78, T79, T80, 141 to 143 (EDF), R184, Y194, and R231 contribute to the ATP site. Position 79 (T79) interacts with Mg(2+). The segment at 195–265 (TDIDLTEIVE…ITDKALTMLD (71 aa)) is small ATPAse domain (RuvB-S). Residues 268-344 (HEGLDYVDQK…YEHLGYRYTE (77 aa)) form a head domain (RuvB-H) region. The DNA site is built by R304, R323, R325, and R328.

Belongs to the RuvB family. In terms of assembly, homohexamer. Forms an RuvA(8)-RuvB(12)-Holliday junction (HJ) complex. HJ DNA is sandwiched between 2 RuvA tetramers; dsDNA enters through RuvA and exits via RuvB. An RuvB hexamer assembles on each DNA strand where it exits the tetramer. Each RuvB hexamer is contacted by two RuvA subunits (via domain III) on 2 adjacent RuvB subunits; this complex drives branch migration. In the full resolvosome a probable DNA-RuvA(4)-RuvB(12)-RuvC(2) complex forms which resolves the HJ.

The protein resides in the cytoplasm. The catalysed reaction is ATP + H2O = ADP + phosphate + H(+). Its function is as follows. The RuvA-RuvB-RuvC complex processes Holliday junction (HJ) DNA during genetic recombination and DNA repair, while the RuvA-RuvB complex plays an important role in the rescue of blocked DNA replication forks via replication fork reversal (RFR). RuvA specifically binds to HJ cruciform DNA, conferring on it an open structure. The RuvB hexamer acts as an ATP-dependent pump, pulling dsDNA into and through the RuvAB complex. RuvB forms 2 homohexamers on either side of HJ DNA bound by 1 or 2 RuvA tetramers; 4 subunits per hexamer contact DNA at a time. Coordinated motions by a converter formed by DNA-disengaged RuvB subunits stimulates ATP hydrolysis and nucleotide exchange. Immobilization of the converter enables RuvB to convert the ATP-contained energy into a lever motion, pulling 2 nucleotides of DNA out of the RuvA tetramer per ATP hydrolyzed, thus driving DNA branch migration. The RuvB motors rotate together with the DNA substrate, which together with the progressing nucleotide cycle form the mechanistic basis for DNA recombination by continuous HJ branch migration. Branch migration allows RuvC to scan DNA until it finds its consensus sequence, where it cleaves and resolves cruciform DNA. This Streptococcus mutans serotype c (strain ATCC 700610 / UA159) protein is Holliday junction branch migration complex subunit RuvB.